The following is a 441-amino-acid chain: Homogentisate 1,2-dioxygenase (441 aa).

The active-site Proton acceptor is His-287. Fe cation is bound by residues His-330 and Glu-336. Residues Tyr-345 and His-366 each coordinate homogentisate. His-366 is a Fe cation binding site.

The protein belongs to the homogentisate dioxygenase family. As to quaternary structure, hexamer; dimer of trimers. The cofactor is Fe cation.

The enzyme catalyses homogentisate + O2 = 4-maleylacetoacetate + H(+). The protein operates within amino-acid degradation; L-phenylalanine degradation; acetoacetate and fumarate from L-phenylalanine: step 4/6. Involved in the catabolism of homogentisate (2,5-dihydroxyphenylacetate or 2,5-OH-PhAc), a central intermediate in the degradation of phenylalanine and tyrosine. Catalyzes the oxidative ring cleavage of the aromatic ring of homogentisate to yield maleylacetoacetate. The protein is Homogentisate 1,2-dioxygenase of Xanthomonas oryzae pv. oryzae (strain KACC10331 / KXO85).